The primary structure comprises 548 residues: MLLDTLLELAGGINNVTRILAPQGQVVLALKHPPLVPHLPDDVSLQSVLGEWQLSVQRTAEVSDQQLAAIGKAIAERQKLETLPYQTALDCPYRPLWHISPPQGLLNDPNGFIYHQGEYHLFYQWHPFACEHKDKYWVHLKSLDLVDWQWQSVALTPSDWFDSHGVFSGHAVSHQQDLWLFYTGNTRLGVDRQRQTMQCAARMNANGEFEKLGPVIRCLPEGVTEHIRDPKVIYTQGKWQMLLGAQTLAHQGRLAVYHSDDLLHWHFDKLYGDELGDYGYMWECPDWFELQGEAFFVFGPQGIASANPHHTIEHQNRIFRATQNAQGEIALLQGWPLDEGFDFYAPQTAQTADGRRVLCGWMGLPDETQHPSCDQGWIHQLTALRELEWREGRIYQHPLRELDTLQSEPHTLLLSDNVTELKTKSFALQVTLPWGCELRLMQNTQYRVTLTLDAENQLLRLDRSATQIRQGDTIRELKLDSPTVELRILADQSSLEIFINQGEHVMTSRIFTPRDASGISLHGASVDAKLYYMAPASAPFNLEVNVQP.

Residues 105–108 (LLND), Q124, 167–168 (FS), 228–229 (RD), and E283 contribute to the substrate site. D108 is a catalytic residue.

This sequence belongs to the glycosyl hydrolase 32 family.

The protein resides in the cytoplasm. The catalysed reaction is Hydrolysis of terminal non-reducing beta-D-fructofuranoside residues in beta-D-fructofuranosides.. It functions in the pathway glycan biosynthesis; sucrose metabolism. Functionally, enables the bacterium to metabolize sucrose as a sole carbon source. The chain is Probable sucrose-6-phosphate hydrolase from Vibrio cholerae serotype O1 (strain ATCC 39315 / El Tor Inaba N16961).